We begin with the raw amino-acid sequence, 267 residues long: Probable aquaporin TIP3-2 (267 aa).

Met1 is modified (N-acetylmethionine). An N-acetylalanine; in Probable aquaporin TIP3-2, N-terminally processed modification is found at Ala2. Residues 2 to 26 (ATSARRAYGFGRADEATHPDSIRAT) lie on the Cytoplasmic side of the membrane. The chain crosses the membrane as a helical span at residues 27–47 (LAEFLSTFVFVFAGEGSILAL). Topologically, residues 48–66 (DKLYWDTAAHTGTNTPGGL) are vacuolar. Residues 67-87 (VLVALAHALALFAAVSAAINV) form a helical membrane-spanning segment. The Cytoplasmic portion of the chain corresponds to 88–110 (SGGHVNPAVTFAALIGGRISVIR). The NPA 1 signature appears at 93–95 (NPA). The chain crosses the membrane as a helical span at residues 111–131 (AIYYWVAQLIGAILACLLLRL). Residues 132 to 151 (ATNGLRPVGFHVASGVSELH) lie on the Vacuolar side of the membrane. A helical membrane pass occupies residues 152 to 172 (GLLMEIILTFALVYVVYSTAI). The Cytoplasmic segment spans residues 173–178 (DPKRGS). The chain crosses the membrane as a helical span at residues 179-199 (IGIIAPLAIGLIVGANILVGG). Residues 200–226 (PFDGASMNPARAFGPALVGWRWSNHWI) are Vacuolar-facing. The short motif at 207 to 209 (NPA) is the NPA 2 element. Residues 227–247 (YWVGPFIGGALAALIYEYMII) traverse the membrane as a helical segment. The Cytoplasmic portion of the chain corresponds to 248–267 (PSVNEPPHHSTHQPLAPEDY).

Belongs to the MIP/aquaporin (TC 1.A.8) family. TIP (TC 1.A.8.10) subfamily. In terms of tissue distribution, predominantly expressed in developing seeds. Also expressed in rosette leaves.

The protein localises to the vacuole membrane. Its function is as follows. Aquaporins facilitate the transport of water and small neutral solutes across cell membranes. The protein is Probable aquaporin TIP3-2 (TIP3-2) of Arabidopsis thaliana (Mouse-ear cress).